Consider the following 466-residue polypeptide: Glucose-6-phosphate 1-dehydrogenase 1 (466 aa).

NADP(+) is bound by residues Ser-48, Asp-88–Val-89, and Lys-141. Positions 171, 175, 209, and 228 each coordinate substrate. His-233 functions as the Proton acceptor in the catalytic mechanism. Substrate-binding residues include Lys-319 and Lys-324.

It belongs to the glucose-6-phosphate dehydrogenase family.

The enzyme catalyses D-glucose 6-phosphate + NADP(+) = 6-phospho-D-glucono-1,5-lactone + NADPH + H(+). It participates in carbohydrate degradation; pentose phosphate pathway; D-ribulose 5-phosphate from D-glucose 6-phosphate (oxidative stage): step 1/3. Functionally, catalyzes the oxidation of glucose 6-phosphate to 6-phosphogluconolactone. This chain is Glucose-6-phosphate 1-dehydrogenase 1, found in Mycobacterium tuberculosis (strain ATCC 25618 / H37Rv).